The sequence spans 501 residues: Beta-secretase 1 (501 aa).

Residues 1-21 (MAQALPWLLLWMGSGVLPAHG) form the signal peptide. Positions 22–45 (SQPGIRLPLRSGLGGAPLGLRLPR) are excised as a propeptide. At 22–457 (SQPGIRLPLR…PQTDESTLMT (436 aa)) the chain is on the extracellular side. Residues 39-58 (LGLRLPRETDEESEEPGRRG) are disordered. In terms of domain architecture, Peptidase A1 spans 75 to 416 (YYVEMTLGSP…DRARKRIGFA (342 aa)). Residue aspartate 93 is part of the active site. Lysine 126 bears the N6-acetyllysine mark. N-linked (GlcNAc...) asparagine glycans are attached at residues asparagine 153, asparagine 172, and asparagine 223. Intrachain disulfides connect cysteine 216–cysteine 420, cysteine 278–cysteine 443, and cysteine 330–cysteine 380. N6-acetyllysine occurs at positions 275, 279, and 285. Aspartate 289 is an active-site residue. 3 positions are modified to N6-acetyllysine: lysine 299, lysine 300, and lysine 307. A glycan (N-linked (GlcNAc...) asparagine) is linked at asparagine 354. Residues 458–478 (IAYVMAAICALFMLPLCLMVC) form a helical membrane-spanning segment. S-palmitoyl cysteine attachment occurs at residues cysteine 474, cysteine 478, cysteine 482, and cysteine 485. Residues 479–501 (QWRCLRCLRHQHDDFADDISLLK) lie on the Cytoplasmic side of the membrane. Residues 479 to 501 (QWRCLRCLRHQHDDFADDISLLK) form an interaction with RTN3 region. Residues 496–500 (DISLL) carry the DXXLL motif. Serine 498 is modified (phosphoserine). Residue lysine 501 forms a Glycyl lysine isopeptide (Lys-Gly) (interchain with G-Cter in ubiquitin) linkage.

Belongs to the peptidase A1 family. In terms of assembly, monomer. Interacts (via DXXLL motif) with GGA1, GGA2 and GGA3 (via their VHS domain); the interaction highly increases when BACE1 is phosphorylated at Ser-498. Interacts with RTN1; RTN2; RTN3 and RTN4; the interaction leads to inhibition of amyloid precursor protein processing. Interacts with SNX6. Interacts with PCSK9. Interacts with NAT8 and NAT8B. Interacts with BIN1. Interacts (via extracellular domain) with ADAM10 (via extracellular domain). Interacts with SORL1; this interaction may affect binding with APP and hence reduce APP cleavage. Interacts with NRDC AND NRG1. Post-translationally, palmitoylation mediates lipid raft localization. In terms of processing, acetylated in the endoplasmic reticulum at Lys-126, Lys-275, Lys-279, Lys-285, Lys-299, Lys-300 and Lys-307. Acetylation by NAT8 and NAT8B is transient and deacetylation probably occurs in the Golgi. Acetylation regulates the maturation, the transport to the plasma membrane, the stability and the expression of the protein. Ubiquitinated at Lys-501, ubiquitination leads to lysosomal degradation. Monoubiquitinated and 'Lys-63'-linked polyubitinated. Deubiquitnated by USP8; inhibits lysosomal degradation. Post-translationally, phosphorylation at Ser-498 is required for interaction with GGA1 and retrograded transport from endosomal compartments to the trans-Golgi network. Non-phosphorylated BACE1 enters a direct recycling route to the cell surface. In terms of processing, N-Glycosylated. Addition of a bisecting N-acetylglucosamine by MGAT3 blocks lysosomal targeting, further degradation and is required for maintaining stability under stress conditions.

Its subcellular location is the cell membrane. The protein resides in the golgi apparatus. The protein localises to the trans-Golgi network. It localises to the endoplasmic reticulum. It is found in the endosome. Its subcellular location is the cell surface. The protein resides in the cytoplasmic vesicle membrane. The protein localises to the membrane raft. It localises to the lysosome. It is found in the late endosome. Its subcellular location is the early endosome. The protein resides in the recycling endosome. The protein localises to the cell projection. It localises to the axon. It is found in the dendrite. It catalyses the reaction Broad endopeptidase specificity. Cleaves Glu-Val-Asn-Leu-|-Asp-Ala-Glu-Phe in the Swedish variant of Alzheimer's amyloid precursor protein.. Its activity is regulated as follows. Inhibited by RTN3 and RTN4. Functionally, responsible for the proteolytic processing of the amyloid precursor protein (APP). Cleaves at the N-terminus of the A-beta peptide sequence, between residues 671 and 672 of APP, leads to the generation and extracellular release of beta-cleaved soluble APP, and a corresponding cell-associated C-terminal fragment which is later released by gamma-secretase. Cleaves CHL1. The sequence is that of Beta-secretase 1 (BACE1) from Bos taurus (Bovine).